A 366-amino-acid chain; its full sequence is A-type ATP synthase subunit C (366 aa).

Belongs to the V-ATPase V0D/AC39 subunit family. In terms of assembly, has multiple subunits with at least A(3), B(3), C, D, E, F, H, I and proteolipid K(x).

The protein localises to the cell membrane. Functionally, component of the A-type ATP synthase that produces ATP from ADP in the presence of a proton gradient across the membrane. The sequence is that of A-type ATP synthase subunit C from Thermococcus gammatolerans (strain DSM 15229 / JCM 11827 / EJ3).